Consider the following 436-residue polypeptide: bZIP transcription factor RISBZ1 (436 aa).

The tract at residues 1-27 (MEHVFAVDEIPDPLWAPPPPVQPAAAA) is required for transactivation activity. The tract at residues 182 to 258 (LSPGPNGGSG…SARRSRSRKA (77 aa)) is disordered. The segment covering 215–225 (PSEDDDMEGDA) has biased composition (acidic residues). The bZIP domain maps to 236-299 (EDKVKKRKES…SAAAIDNRVL (64 aa)). The basic motif stretch occupies residues 238–257 (KVKKRKESNRESARRSRSRK). The tract at residues 264 to 278 (LEEQVSLLRVENSSL) is leucine-zipper.

In terms of assembly, homodimer. Forms heterodimers with RISBZ2/BZP33 and RISBZ3/BZP20. Interacts with DOF3/RPBF. Specifically expressed in seeds. Expressed in aleurone and subaleurone layers of maturing seeds, but not in the embryo tissues.

Its subcellular location is the nucleus. Transcriptional activator that binds to the DNA specific sequence 5'-TGAGTCA-3' found in seed storage protein gene promoters. Involved in the endosperm-specific regulation of storage protein genes. Can activate the expression of genes encoding for the seed storage proteins glutelin, prolamin, globulin and the allergen RAG1. Functions synergistically with DOF3/RPBF to positively regulate quantitatively many seed storage protein genes. Functions synergistically with DOF3/RPBF to positively regulate some metabolic enzymes, such as alanine aminotransferase and pyruvate phosphate dikinase, that are expressed in developing seeds. Functions synergistically with DOF3/RPBF to positively regulate genes that are key players in the development of aleurone layers. Functions synergistically with DOF3/RPBF to positively regulate the glutelin GLUD-1 gene in endosperm of developing seeds. Can activate the expression of the bifunctional lysine-degrading enzyme, lysine ketoglutarate reductase/saccharopine dehydrogenase (LKR/SDH), one of the key regulators determining free lysine content in plants. Functions as a key regulator of starch synthesis in seeds, by direct binding to the promoters of starch-synthesizing genes, such as AGPL3, WAXXY and SBE1. In Oryza sativa subsp. japonica (Rice), this protein is bZIP transcription factor RISBZ1.